A 493-amino-acid chain; its full sequence is Amphoterin-induced protein 1 (493 aa).

An N-terminal signal peptide occupies residues 1–27; it reads MHPHRDPRGLWLLLPSLSLLLFEVARA. Residues 28-61 form the LRRNT domain; sequence GRAVVSCPAACLCASNILSCSKQQLPNVPHSLPS. Residues 28–372 lie on the Extracellular side of the membrane; it reads GRAVVSCPAA…LHGHHDTLNT (345 aa). Disulfide bonds link cysteine 34–cysteine 40 and cysteine 38–cysteine 47. 6 LRR repeats span residues 62–83, 87–108, 111–132, 135–156, 159–179, and 186–206; these read YTAL…WTPT, QLHS…AFSP, NLRY…LFSD, VLEV…AFDD, QLQK…ELVK, and KLTL…PDLQ. A glycan (N-linked (GlcNAc...) asparagine) is linked at asparagine 72. Residues 221–272 form the LRRCT domain; sequence NPLNCDCELYQLFSHWQYRQLSSVMDFQEDLYCMNSKKLHNVFNLSFLNCGE. Cystine bridges form between cysteine 225/cysteine 253, cysteine 227/cysteine 270, and cysteine 290/cysteine 341. N-linked (GlcNAc...) asparagine glycosylation is found at asparagine 264, asparagine 315, asparagine 349, and asparagine 360. The Ig-like C2-type domain occupies 269–353; that stretch reads NCGEYKERAW…MGETFNETLS (85 aa). A helical membrane pass occupies residues 373–393; the sequence is AYTTLVGCILSVVLVLIYLYL. Over 394–493 the chain is Cytoplasmic; the sequence is TPCRCWCRGV…SVFSDTPIVV (100 aa). The segment at 405–493 is disordered; it reads KPSSHQGDSL…SVFSDTPIVV (89 aa). Residues 408-424 show a composition bias toward polar residues; it reads SHQGDSLSSSMLSTTPN. The span at 431 to 442 shows a compositional bias: basic and acidic residues; that stretch reads GDKDDGFDRRVA. Serine 477 and serine 481 each carry phosphoserine.

Belongs to the immunoglobulin superfamily. AMIGO family. As to quaternary structure, homodimer, and heterodimer with AMIGO2 and AMIGO3. Interacts with KCNB1.

The protein localises to the cell membrane. The protein resides in the perikaryon. It localises to the cell projection. Its subcellular location is the dendrite. It is found in the axon. Promotes growth and fasciculation of neurites from cultured hippocampal neurons. May be involved in fasciculation as well as myelination of developing neural axons. May have a role in regeneration as well as neural plasticity in the adult nervous system. May mediate homophilic as well as heterophilic cell-cell interaction and contribute to signal transduction through its intracellular domain. Assembled with KCNB1 modulates the gating characteristics of the delayed rectifier voltage-dependent potassium channel KCNB1. The sequence is that of Amphoterin-induced protein 1 from Homo sapiens (Human).